Here is a 525-residue protein sequence, read N- to C-terminus: Cytochrome P450 monooxygenase tpcC (525 aa).

The chain crosses the membrane as a helical span at residues Leu13–Val33. Cys457 is a heme binding site.

It belongs to the cytochrome P450 family. Heme serves as cofactor.

It localises to the membrane. Its pathway is secondary metabolite biosynthesis; terpenoid biosynthesis. Its function is as follows. Cytochrome P450 monooxygenase; part of the gene cluster that mediates the biosynthesis of terpestacin. The bifunctional terpene synthase tpcA converts isopentenyl diphosphate (IPP) and dimethylallyl diphosphate (DMAPP) into the sesterterpene preterpestacin I. The C-terminal prenyltransferase (PT) domain of tpcA catalyzes formation of GFPP, whereas the N-terminal terpene cyclase (TC) domain catalyzes the cyclization of GFPP into preterpestacin I. The cytochrome P450 monooxygenase tpcB then hydroxylates preterpestacin I to yield 24-hydroxypreterpstacin I (renamed as preterpestacin II) whereas the cytochrome P450 monooxygenase tpcC further hydroxylates preterpestacin II to yield 16,17-dihydroxypreterpestacin II (renamed as preterpestacin III). Finally, the FAD-dependent monooxygenase tpcD converts preterpestacin III into terpestacin. This chain is Cytochrome P450 monooxygenase tpcC, found in Cochliobolus heterostrophus (strain C5 / ATCC 48332 / race O) (Southern corn leaf blight fungus).